We begin with the raw amino-acid sequence, 401 residues long: Chorismate synthase (401 aa).

NADP(+) contacts are provided by arginine 40 and arginine 46. FMN contacts are provided by residues 135-137 (RAS), 256-257 (QA), glycine 300, 315-319 (KPIST), and arginine 341.

The protein belongs to the chorismate synthase family. As to quaternary structure, homotetramer. FMNH2 is required as a cofactor.

The enzyme catalyses 5-O-(1-carboxyvinyl)-3-phosphoshikimate = chorismate + phosphate. The protein operates within metabolic intermediate biosynthesis; chorismate biosynthesis; chorismate from D-erythrose 4-phosphate and phosphoenolpyruvate: step 7/7. In terms of biological role, catalyzes the anti-1,4-elimination of the C-3 phosphate and the C-6 proR hydrogen from 5-enolpyruvylshikimate-3-phosphate (EPSP) to yield chorismate, which is the branch point compound that serves as the starting substrate for the three terminal pathways of aromatic amino acid biosynthesis. This reaction introduces a second double bond into the aromatic ring system. This chain is Chorismate synthase, found in Mycobacterium bovis (strain BCG / Pasteur 1173P2).